The primary structure comprises 389 residues: 26S proteasome regulatory subunit 6B homolog (389 aa).

An ATP-binding site is contributed by 175–182 (GPPGTGKT).

This sequence belongs to the AAA ATPase family.

It localises to the cytoplasm. It is found in the nucleus. Functionally, the 26S proteasome is involved in the ATP-dependent degradation of ubiquitinated proteins. The regulatory (or ATPase) complex confers ATP dependency and substrate specificity to the 26S complex. In Schizosaccharomyces pombe (strain 972 / ATCC 24843) (Fission yeast), this protein is 26S proteasome regulatory subunit 6B homolog (rpt3).